A 38-amino-acid chain; its full sequence is DNA binding protein VP8 (38 aa).

Positions 1–16 are enriched in basic residues; the sequence is MKRKPMSRKASQKTFK. Residues 1–38 are disordered; that stretch reads MKRKPMSRKASQKTFKKNTGVQRMNHLNPRAMRGGIRL.

It belongs to the microviridae J protein family.

The protein resides in the virion. The protein localises to the host cytoplasm. Mediates ssDNA packaging into virion, it locates to the internal surface of the capsid, thereby displacing the internal scaffolding protein VP3 during virion formation. Additionally, protein VP8 plays a role in viral attachment to the host cell. The sequence is that of DNA binding protein VP8 from Bdellovibrio phage phiMH2K (Bacteriophage phiMH2K).